The primary structure comprises 297 residues: Craniofacial development protein 1 (297 aa).

Acidic residues-rich tracts occupy residues Met-1–Tyr-18 and Tyr-25–Glu-43. 2 disordered regions span residues Met-1–Lys-154 and Phe-190–Gly-221. Residues Thr-48–Gln-65 are compositionally biased toward basic residues. Residues Leu-69–Glu-78 are compositionally biased toward acidic residues. A phosphoserine mark is found at Ser-80, Ser-83, and Ser-84. Residues Glu-93 to Glu-110 are compositionally biased toward basic and acidic residues. Ser-114 carries the post-translational modification Phosphoserine. A Glycyl lysine isopeptide (Lys-Gly) (interchain with G-Cter in SUMO2) cross-link involves residue Lys-148. The tract at residues Val-176–Gly-215 is hydrophilic. The segment covering Phe-190–Pro-199 has biased composition (basic and acidic residues). Position 214 is a phosphoserine (Ser-214). One can recognise a BCNT-C domain in the interval Leu-216–Pro-297. Lys-217 bears the N6-methyllysine mark. Ser-248 bears the Phosphoserine mark.

It is found in the chromosome. The protein localises to the centromere. Its subcellular location is the kinetochore. Functionally, may play a role during embryogenesis. In Camelus dromedarius (Dromedary), this protein is Craniofacial development protein 1 (CFDP1).